Reading from the N-terminus, the 375-residue chain is S-(hydroxymethyl)glutathione dehydrogenase (375 aa).

A Zn(2+)-binding site is contributed by C40. Residue H41 participates in NAD(+) binding. Positions 62, 63, 92, 95, 98, 106, and 170 each coordinate Zn(2+). Residues 195–200, D219, 293–295, and 318–320 contribute to the NAD(+) site; these read GLGGIG, IGV, and TAF.

Belongs to the zinc-containing alcohol dehydrogenase family. Class-III subfamily. Homotetramer. Requires Zn(2+) as cofactor.

The enzyme catalyses a primary alcohol + NAD(+) = an aldehyde + NADH + H(+). It catalyses the reaction a secondary alcohol + NAD(+) = a ketone + NADH + H(+). The catalysed reaction is S-(hydroxymethyl)glutathione + NADP(+) = S-formylglutathione + NADPH + H(+). It carries out the reaction S-(hydroxymethyl)glutathione + NAD(+) = S-formylglutathione + NADH + H(+). The enzyme catalyses S-nitrosoglutathione + NADH + H(+) = S-(hydroxysulfenamide)glutathione + NAD(+). Functionally, oxidizes long-chain alcohols and, in the presence of glutathione, is able to oxidize formaldehyde. Also acts as a S-nitroso-glutathione reductase by catalyzing the NADH-dependent reduction of S-nitrosoglutathione, thereby regulating protein S-nitrosylation. The sequence is that of S-(hydroxymethyl)glutathione dehydrogenase (flhA) from Paracoccus denitrificans.